Consider the following 109-residue polypeptide: Spermidine export protein MdtI (109 aa).

4 consecutive transmembrane segments (helical) span residues 6 to 26, 36 to 56, 64 to 84, and 88 to 108; these read WIHAAWLAIAIVLEIIANVFL, IYGILSLAAVLGAFSALSQAV, AYALWGGFGIAATIAAGWVLF, and LNNKGWAGVILLVAGMVLIKL.

This sequence belongs to the drug/metabolite transporter (DMT) superfamily. Small multidrug resistance (SMR) (TC 2.A.7.1) family. MdtI subfamily. As to quaternary structure, forms a complex with MdtJ.

The protein resides in the cell inner membrane. Catalyzes the excretion of spermidine. In Klebsiella pneumoniae subsp. pneumoniae (strain ATCC 700721 / MGH 78578), this protein is Spermidine export protein MdtI.